We begin with the raw amino-acid sequence, 89 residues long: DNA-directed RNA polymerase subunit omega (89 aa).

This sequence belongs to the RNA polymerase subunit omega family. As to quaternary structure, the RNAP catalytic core consists of 2 alpha, 1 beta, 1 beta' and 1 omega subunit. When a sigma factor is associated with the core the holoenzyme is formed, which can initiate transcription.

It catalyses the reaction RNA(n) + a ribonucleoside 5'-triphosphate = RNA(n+1) + diphosphate. Its function is as follows. Promotes RNA polymerase assembly. Latches the N- and C-terminal regions of the beta' subunit thereby facilitating its interaction with the beta and alpha subunits. The polypeptide is DNA-directed RNA polymerase subunit omega (Idiomarina loihiensis (strain ATCC BAA-735 / DSM 15497 / L2-TR)).